Reading from the N-terminus, the 591-residue chain is V-type ATP synthase alpha chain (591 aa).

233–240 (GPFGAGKT) lines the ATP pocket.

Belongs to the ATPase alpha/beta chains family.

It catalyses the reaction ATP + H2O + 4 H(+)(in) = ADP + phosphate + 5 H(+)(out). In terms of biological role, produces ATP from ADP in the presence of a proton gradient across the membrane. The V-type alpha chain is a catalytic subunit. This is V-type ATP synthase alpha chain from Streptococcus pyogenes serotype M1.